The chain runs to 318 residues: Transcription factor FER-LIKE IRON DEFICIENCY-INDUCED TRANSCRIPTION FACTOR (318 aa).

The segment at 90–138 is disordered; the sequence is FDGDSVRAGGEEDEEDYNDGDDSSATTTNNDGTRKTKTDRSRTLISERR. Residues 100 to 111 show a composition bias toward acidic residues; it reads EEDEEDYNDGDD. A compositionally biased stretch (basic and acidic residues) spans 121-136; sequence GTRKTKTDRSRTLISE. A bHLH domain is found at 127–176; sequence TDRSRTLISERRRRGRMKDKLYALRSLVPNITKMDKASIVGDAVLYVQEL.

Homodimer. As to expression, expressed in roots and inflorescence, and to a lower extent, in leaves and stems. In roots, confined to the outer cell layers, specifically in the differentiation zone. Also detected in the endodermis and inner tissues of the central cylinder.

It localises to the nucleus. Transcription factor. Essential protein involved in iron uptake responses. Regulates FRO2 at the level of mRNA accumulation and IRT1 at the level of protein accumulation. Confers enhanced iron mobilization responses at low iron supply. The protein is Transcription factor FER-LIKE IRON DEFICIENCY-INDUCED TRANSCRIPTION FACTOR (FIT) of Arabidopsis thaliana (Mouse-ear cress).